The primary structure comprises 295 residues: Phosphatidylglycerol--prolipoprotein diacylglyceryl transferase (295 aa).

Transmembrane regions (helical) follow at residues 28 to 48, 69 to 89, 101 to 121, and 131 to 151; these read WYAL…VLAT, LLTW…VLFY, ILMV…VVIA, and IPKL…LLLG. Arg152 lines the a 1,2-diacyl-sn-glycero-3-phospho-(1'-sn-glycerol) pocket. Transmembrane regions (helical) follow at residues 195 to 215, 224 to 244, and 268 to 288; these read QLYE…WLVW, GLIT…VEFF, and GLTM…WFVL.

The protein belongs to the Lgt family.

The protein localises to the cell inner membrane. The enzyme catalyses L-cysteinyl-[prolipoprotein] + a 1,2-diacyl-sn-glycero-3-phospho-(1'-sn-glycerol) = an S-1,2-diacyl-sn-glyceryl-L-cysteinyl-[prolipoprotein] + sn-glycerol 1-phosphate + H(+). It participates in protein modification; lipoprotein biosynthesis (diacylglyceryl transfer). In terms of biological role, catalyzes the transfer of the diacylglyceryl group from phosphatidylglycerol to the sulfhydryl group of the N-terminal cysteine of a prolipoprotein, the first step in the formation of mature lipoproteins. This Ruegeria pomeroyi (strain ATCC 700808 / DSM 15171 / DSS-3) (Silicibacter pomeroyi) protein is Phosphatidylglycerol--prolipoprotein diacylglyceryl transferase.